Consider the following 94-residue polypeptide: C-C motif chemokine 26 (94 aa).

An N-terminal signal peptide occupies residues 1 to 23 (MKSFPVAFLVLLIFILSVHRGVT). Disulfide bonds link Cys33–Cys57 and Cys34–Cys73.

It belongs to the intercrine beta (chemokine CC) family. Monomer.

The protein resides in the secreted. In terms of biological role, chemoattractant for eosinophils and basophils. Acts as a ligand for C-C chemokine receptor CCR3 which triggers Ca(2+) mobilization in eosinophils. Also acts as a ligand for CX3C chemokine receptor CX3CR1, inducing cell chemotaxis. This is C-C motif chemokine 26 from Canis lupus familiaris (Dog).